Here is a 1074-residue protein sequence, read N- to C-terminus: Semaphorin-5A (1074 aa).

A signal peptide spans M1 to P22. A Sema domain is found at H35–L484. 2 cysteine pairs are disulfide-bonded: C104-C114 and C131-C140. N-linked (GlcNAc...) asparagine glycosylation is found at N147, N168, N227, and N277. Disulfide bonds link C254/C357 and C278/C320. Residues N323 and N367 are each glycosylated (N-linked (GlcNAc...) asparagine). One can recognise a PSI domain in the interval R486 to P533. N-linked (GlcNAc...) asparagine glycans are attached at residues N536 and N591. TSP type-1 domains are found at residues D540–S593, N595–P651, and H653–P702. Cystine bridges form between C607–C644, C611–C650, C622–C634, C665–C696, C669–C701, and C680–C686. N-linked (GlcNAc...) asparagine glycosylation is present at N717. TSP type-1 domains are found at residues N784–P839, D841–P896, and E897–S944. 6 disulfides stabilise this stretch: C796–C833, C800–C838, C811–C823, C853–C890, C857–C895, and C868–C880. N-linked (GlcNAc...) asparagine glycans are attached at residues N898 and N933. The chain crosses the membrane as a helical span at residues F969 to V989. N1015 carries N-linked (GlcNAc...) asparagine glycosylation.

In terms of assembly, binds PLXNB3.

The protein resides in the membrane. Bifunctional axonal guidance cue regulated by sulfated proteoglycans; attractive effects result from interactions with heparan sulfate proteoglycans (HSPGs), while the inhibitory effects depend on interactions with chondroitin sulfate proteoglycans (CSPGs). Ligand for receptor PLXNB3. In glioma cells, SEMA5A stimulation of PLXNB3 results in the disassembly of F-actin stress fibers, disruption of focal adhesions and cellular collapse as well as inhibition of cell migration and invasion through ARHGDIA-mediated inactivation of RAC1. May promote angiogenesis by increasing endothelial cell proliferation and migration and inhibiting apoptosis. This Rattus norvegicus (Rat) protein is Semaphorin-5A (Sema5a).